Reading from the N-terminus, the 866-residue chain is Autophagy-related protein 9 (866 aa).

The Cytoplasmic segment spans residues 1 to 94; sequence MMSSGHKGPN…KGLWCIIVKW (94 aa). A helical transmembrane segment spans residues 95-115; sequence AVELLSLGFIICFSGFFLLYV. Topologically, residues 116–153 are lumenal; the sequence is DWNGLQNAKCGMDAVESGTKPCDLVKEAIHPHPLSPFT. A helical membrane pass occupies residues 154 to 174; the sequence is LTTAIIVGYLALFSVYWLFCF. The Cytoplasmic portion of the chain corresponds to 175 to 319; the sequence is LRFFAQLKDT…VSNPTTLKKR (145 aa). The stretch at 320–340 is an intramembrane region; sequence LFVVGLAMLLLSPFLVIFMLV. Residues 341 to 404 lie on the Cytoplasmic side of the membrane; that stretch reads YLFLRHAEQF…LKQFPSPIIS (64 aa). Residues 405–425 traverse the membrane as a helical segment; the sequence is IIAKFVSFVSGGFAAVLIIIA. Over 426 to 433 the chain is Lumenal; it reads FLEESLLE. The chain crosses the membrane as a helical span at residues 434–454; sequence GHIFGRNLFWYAAVFGTITAI. Residues 455 to 507 lie on the Cytoplasmic side of the membrane; it reads SRAAISDELLVLDPVGTMSLVVQNTHYMPKRWRGKENKDDVRLELETLFQYTG. The stretch at 508-528 is an intramembrane region; the sequence is MMLLEEIASIFITPFLLMFVV. Residues 529–866 lie on the Cytoplasmic side of the membrane; that stretch reads PKRVDDILQF…ETSTSSTTLR (338 aa). A disordered region spans residues 744–781; that stretch reads QPEGEDSYGSQHPLDGRNQWWGRGNHSQISTAHPATTN. A compositionally biased stretch (polar residues) spans 768–781; it reads NHSQISTAHPATTN.

The protein belongs to the ATG9 family. In terms of assembly, homotrimer; forms a homotrimer with a central pore that forms a path between the two membrane leaflets. As to expression, expressed in roots, leaves, stems and flowers.

It is found in the preautophagosomal structure membrane. Phospholipid scramblase involved in autophagy by mediating autophagosomal membrane expansion. Cycles between the preautophagosomal structure/phagophore assembly site (PAS) and the cytoplasmic vesicle pool and supplies membrane for the growing autophagosome. Lipid scramblase activity plays a key role in preautophagosomal structure/phagophore assembly by distributing the phospholipids that arrive through ATG2 from the cytoplasmic to the luminal leaflet of the bilayer, thereby driving autophagosomal membrane expansion. In addition to autophagy, also plays a role in necrotic cell death. Plays an essential role in plant nutrient recycling. The chain is Autophagy-related protein 9 from Arabidopsis thaliana (Mouse-ear cress).